We begin with the raw amino-acid sequence, 293 residues long: MGWPPAQKPEDSKEEHGGPAQTDVCATQVSEEFPGSCADEVLSSGSISFSGELQSYSHTSESPVETKTPTTSSEEQDEQSELSLLQKDENKLSEMWINHLKSKEIHSERSQPDRRLPPEIPKESAEELDALQSFCTKKVNLIHQRQDLRAKKSNRPKRLQLRWIAETSEVDAFNCTIPDELWNRIYLENTRATLAYIGAITQHISSQCPSCNSKRAELAQSDFLRRRKTLLQSLLLQEKIDEHLHTTDFLTRVGEAHQGFPRLSDDPRIIWKRLTEKMLKGSSGFGRAYSKQV.

Disordered regions lie at residues 1-23 (MGWPPAQKPEDSKEEHGGPAQTD) and 52-83 (ELQSYSHTSESPVETKTPTTSSEEQDEQSELS). Basic and acidic residues predominate over residues 8–17 (KPEDSKEEHG). Residues 52–71 (ELQSYSHTSESPVETKTPTT) are compositionally biased toward polar residues.

This is an uncharacterized protein from Mus musculus (Mouse).